Consider the following 339-residue polypeptide: Transcription initiation factor IIB (339 aa).

The TFIIB-type zinc-finger motif lies at 39–70; it reads EELICPVCGSKSIIKDYERAEIVCEMCGCVLQ. Positions 43, 46, 62, and 65 each coordinate Zn(2+). 2 tandem repeats follow at residues 156 to 239 and 250 to 331.

Belongs to the TFIIB family.

In terms of biological role, stabilizes TBP binding to an archaeal box-A promoter. Also responsible for recruiting RNA polymerase II to the pre-initiation complex (DNA-TBP-TFIIB). The polypeptide is Transcription initiation factor IIB (Methanococcus maripaludis (strain C5 / ATCC BAA-1333)).